The following is a 414-amino-acid chain: Probable solanesyl-diphosphate synthase 3, chloroplastic (414 aa).

Residues 1-23 (MAAPSSLASSSHLSRRATAAASP) are compositionally biased toward low complexity. Residues 1 to 36 (MAAPSSLASSSHLSRRATAAASPSIPPPSPPPPPQR) are disordered. Residues 1–72 (MAAPSSLASS…KPGVAAVDVP (72 aa)) constitute a chloroplast transit peptide. Residues 24–35 (SIPPPSPPPPPQ) are compositionally biased toward pro residues. 3 residues coordinate isopentenyl diphosphate: Lys134, Arg137, and His172. Asp179 and Asp183 together coordinate Mg(2+). Residue Arg188 coordinates an all-trans-polyprenyl diphosphate. Arg189 contacts isopentenyl diphosphate. The an all-trans-polyprenyl diphosphate site is built by Lys265, Thr266, Gln303, and Lys320.

Belongs to the FPP/GGPP synthase family. As to quaternary structure, homodimer. Mg(2+) serves as cofactor.

The protein localises to the plastid. Its subcellular location is the chloroplast. The catalysed reaction is 7 isopentenyl diphosphate + (2E)-geranyl diphosphate = all-trans-nonaprenyl diphosphate + 7 diphosphate. In terms of biological role, involved in providing solanesyl diphosphate for plastoquinone-9 (PQ-9) formation. In Oryza sativa subsp. japonica (Rice), this protein is Probable solanesyl-diphosphate synthase 3, chloroplastic.